A 587-amino-acid polypeptide reads, in one-letter code: Aspartate--tRNA ligase (587 aa).

Glu-173 is an L-aspartate binding site. The interval 197–200 (QTLK) is aspartate. An L-aspartate-binding site is contributed by Arg-219. ATP-binding positions include 219 to 221 (RDE) and Gln-228. His-446 contributes to the L-aspartate binding site. Position 480 (Glu-480) interacts with ATP. Residue Arg-487 participates in L-aspartate binding. 532–535 (GLDR) lines the ATP pocket.

This sequence belongs to the class-II aminoacyl-tRNA synthetase family. Type 1 subfamily. Homodimer.

It is found in the cytoplasm. It catalyses the reaction tRNA(Asp) + L-aspartate + ATP = L-aspartyl-tRNA(Asp) + AMP + diphosphate. Its function is as follows. Catalyzes the attachment of L-aspartate to tRNA(Asp) in a two-step reaction: L-aspartate is first activated by ATP to form Asp-AMP and then transferred to the acceptor end of tRNA(Asp). In Phocaeicola vulgatus (strain ATCC 8482 / DSM 1447 / JCM 5826 / CCUG 4940 / NBRC 14291 / NCTC 11154) (Bacteroides vulgatus), this protein is Aspartate--tRNA ligase.